Reading from the N-terminus, the 21-residue chain is Testis ecdysiotropin peptide 1 (21 aa).

Residues 1 to 21 (ISDFDEYEPLNDADNNEVLDF) form a disordered region.

Its function is as follows. Start or boost ecdysteroid synthesis in testis of larvae and pupae. The protein is Testis ecdysiotropin peptide 1 of Lymantria dispar (Gypsy moth).